Here is a 1998-residue protein sequence, read N- to C-terminus: Receptor-type tyrosine-protein phosphatase beta (1998 aa).

The N-terminal stretch at 1–22 is a signal peptide; that stretch reads MLRHGALTALWITLSVVQTGVA. 17 Fibronectin type-III domains span residues 23–109, 113–206, 207–291, 292–384, 378–466, 470–556, 557–642, 643–733, 734–821, 822–913, 908–994, 995–1088, 1086–1173, 1176–1263, 1264–1357, 1358–1449, and 1449–1551; these read EQVK…VLQT, PPAR…VPSP, VKDL…TAPM, EVSN…VRNL, PEKV…QGRT, AVLQ…TVPA, QVTD…EGRT, VPSS…TVPD, KVQG…TIPE, PVKD…TVKN, PSTV…LGQT, VPAS…VPAA, PAAV…GRTV, AVNH…TAPS, PPSL…TKPD, KIQN…IDRP, and PPQP…KLGA. The Extracellular segment spans residues 23–1622; the sequence is EQVKCNFTLL…ESEPLFGVIE (1600 aa). Asn28, Asn53, Asn75, Asn173, Asn199, and Asn268 each carry an N-linked (GlcNAc...) asparagine glycan. N-linked (GlcNAc...) asparagine glycans are attached at residues Asn415, Asn422, Asn480, Asn575, Asn599, and Asn653. Residue Asn830 is glycosylated (N-linked (GlcNAc...) asparagine). N-linked (GlcNAc...) asparagine glycans are attached at residues Asn1041, Asn1097, Asn1164, Asn1186, Asn1213, Asn1275, Asn1368, Asn1471, Asn1475, and Asn1519. A helical membrane pass occupies residues 1623-1643; it reads GVSAGLFLIGMLVALVAFFIC. At 1644-1997 the chain is on the cytoplasmic side; the sequence is RQKASHSRER…EYHRDAIYSR (354 aa). A Tyrosine-protein phosphatase domain is found at 1704–1964; sequence LSKEYEDLKD…VYLHQCVRDV (261 aa). Substrate contacts are provided by residues Asp1871, 1905 to 1911, and Gln1949; that span reads CSAGVGR. The Phosphocysteine intermediate role is filled by Cys1905. Position 1982 is a phosphotyrosine (Tyr1982).

Belongs to the protein-tyrosine phosphatase family. Receptor class 3 subfamily. In terms of assembly, monomer. Interacts with TEK. Interacts via fibronectin type-III 17 domain with CDH5. Detected in a complex with CNTN1 and NRCAM. Interacts (phosphorylated form) with FYN and GRB2. Interacts with IGFBP2. Expression is very high in the vasculature of lung, spleen, and kidney, as well as in the heart valves, and is also present in the endothelium of arterioles and venules. Also expressed in tumor vasculature.

Its subcellular location is the membrane. It carries out the reaction O-phospho-L-tyrosyl-[protein] + H2O = L-tyrosyl-[protein] + phosphate. Plays an important role in blood vessel remodeling and angiogenesis. Not necessary for the initial formation of blood vessels, but is essential for their maintenance and remodeling. Can induce dephosphorylation of TEK/TIE2, CDH5/VE-cadherin and KDR/VEGFR-2. Regulates angiopoietin-TIE2 signaling in endothelial cells. Acts as a negative regulator of TIE2, and controls TIE2 driven endothelial cell proliferation, which in turn affects blood vessel remodeling during embryonic development and determines blood vessel size during perinatal growth. Essential for the maintenance of endothelial cell contact integrity and for the adhesive function of VE-cadherin in endothelial cells and this requires the presence of plakoglobin. The protein is Receptor-type tyrosine-protein phosphatase beta (Ptprb) of Mus musculus (Mouse).